We begin with the raw amino-acid sequence, 395 residues long: MNGNRFGRLFQVTTYGESHGEAMGVTVSGVPAGVELDEEAIQAQLDRRKPGQSMITTSRGEPDEVVVNSGVQDGYTTGTPIGMVIQNKDARSGKYEPYVTAPRPSHGDYTYSAKFGTRNWGGGGRSSARETVNWVAAGAVAEQVLDASEYDVEIKAHVNQIGDVEADDVSFEQILDHSEENDVRCADPEAAAEMQELIERYQEAGDSIGGSIYFECRGVPRGLGAPRFDGFPSRLGQAMFSIPATTGVEFGLGKDAVNVTGSERNEDWTFDDGESFDHVESEEGDPVPVGNDHGGLQGGITTGEPIYGEATWHAPTSIPKKQRSADWETGEEKDVQVVGRHDPVLPPRAVPVVEAMLYCTVLDFMLLAGRINPDRVDGNPGQYDTDYHPSSPDND.

Arg48 contacts NADP(+). Residue Arg125–Ser127 coordinates FMN. Positions Arg264–Asp292 are disordered. FMN contacts are provided by residues Gly298, His313–Ser317, and Arg340. The segment at Pro373 to Asp395 is disordered.

This sequence belongs to the chorismate synthase family. FMNH2 is required as a cofactor.

The catalysed reaction is 5-O-(1-carboxyvinyl)-3-phosphoshikimate = chorismate + phosphate. The protein operates within metabolic intermediate biosynthesis; chorismate biosynthesis; chorismate from D-erythrose 4-phosphate and phosphoenolpyruvate: step 7/7. Functionally, catalyzes the anti-1,4-elimination of the C-3 phosphate and the C-6 proR hydrogen from 5-enolpyruvylshikimate-3-phosphate (EPSP) to yield chorismate, which is the branch point compound that serves as the starting substrate for the three terminal pathways of aromatic amino acid biosynthesis. This reaction introduces a second double bond into the aromatic ring system. The protein is Chorismate synthase of Halorubrum lacusprofundi (strain ATCC 49239 / DSM 5036 / JCM 8891 / ACAM 34).